A 100-amino-acid polypeptide reads, in one-letter code: Large ribosomal subunit protein eL30 (100 aa).

It belongs to the eukaryotic ribosomal protein eL30 family.

In Methanococcus maripaludis (strain DSM 14266 / JCM 13030 / NBRC 101832 / S2 / LL), this protein is Large ribosomal subunit protein eL30.